The chain runs to 240 residues: Ditrans,polycis-undecaprenyl-diphosphate synthase ((2E,6E)-farnesyl-diphosphate specific) (240 aa).

Residue Asp18 is part of the active site. Asp18 contacts Mg(2+). Substrate is bound by residues 19–22, Trp23, Arg31, His35, and 63–65; these read GNGR and SSE. Residue Asn66 is the Proton acceptor of the active site. Substrate is bound by residues Trp67, Arg69, Arg186, and 192-194; that span reads RIS. Glu205 contributes to the Mg(2+) binding site.

This sequence belongs to the UPP synthase family. As to quaternary structure, homodimer. Mg(2+) is required as a cofactor.

The enzyme catalyses 8 isopentenyl diphosphate + (2E,6E)-farnesyl diphosphate = di-trans,octa-cis-undecaprenyl diphosphate + 8 diphosphate. Catalyzes the sequential condensation of isopentenyl diphosphate (IPP) with (2E,6E)-farnesyl diphosphate (E,E-FPP) to yield (2Z,6Z,10Z,14Z,18Z,22Z,26Z,30Z,34E,38E)-undecaprenyl diphosphate (di-trans,octa-cis-UPP). UPP is the precursor of glycosyl carrier lipid in the biosynthesis of bacterial cell wall polysaccharide components such as peptidoglycan and lipopolysaccharide. In Pasteurella multocida (strain Pm70), this protein is Ditrans,polycis-undecaprenyl-diphosphate synthase ((2E,6E)-farnesyl-diphosphate specific).